We begin with the raw amino-acid sequence, 304 residues long: Histone H1.8 (304 aa).

The segment covering 1–24 (MAPGSVSSVSSSSFPSRDTSPSGS) has biased composition (low complexity). Disordered regions lie at residues 1-38 (MAPG…PSCR), 110-248 (SKAK…NSVA), and 270-304 (TVQE…NTQA). The H15 domain occupies 45-123 (RNPTMLHMVL…GATGSFKLVP (79 aa)). The segment covering 132–144 (APKAGRGAAGAKE) has biased composition (low complexity). Basic and acidic residues-rich tracts occupy residues 153 to 166 (LKKD…MEKG), 189 to 202 (KPKE…KQDK), and 225 to 237 (ANAH…EKSK). A Nuclear localization signal motif is present at residues 154–170 (KKDQVGKATMEKGQKRR). Over residues 270 to 281 (TVQETKVPTPSQ) the composition is skewed to polar residues.

It belongs to the histone H1/H5 family. Oocyte-specific.

It is found in the cytoplasm. The protein localises to the nucleus. The protein resides in the chromosome. Its function is as follows. May play a key role in the control of gene expression during oogenesis and early embryogenesis, presumably through the perturbation of chromatin structure. Essential for meiotic maturation of germinal vesicle-stage oocytes. The somatic type linker histone H1c is rapidly replaced by H1oo in a donor nucleus transplanted into an oocyte. The greater mobility of H1oo as compared to H1c may contribute to this rapid replacement and increased instability of the embryonic chromatin structure. The rapid replacement of H1c with H1oo may play an important role in nuclear remodeling. This chain is Histone H1.8, found in Mus musculus (Mouse).